We begin with the raw amino-acid sequence, 126 residues long: Larval cuticle protein 2 (126 aa).

A signal peptide spans 1–16 (MFKFVMVFAVLGLAAA). One can recognise a Chitin-binding type R&amp;R domain in the interval 39–100 (ADGFDTDLVV…PVGAVLPTPP (62 aa)).

Functionally, component of the larval cuticle. The protein is Larval cuticle protein 2 (Lcp2) of Drosophila miranda (Fruit fly).